The following is a 185-amino-acid chain: Probable gluconokinase (185 aa).

11–18 (GVSGSGKS) is an ATP binding site.

It belongs to the gluconokinase GntK/GntV family.

It catalyses the reaction D-gluconate + ATP = 6-phospho-D-gluconate + ADP + H(+). The protein operates within carbohydrate acid metabolism; D-gluconate degradation. The chain is Probable gluconokinase (Idnk) from Rattus norvegicus (Rat).